The following is a 186-amino-acid chain: Inner membrane-spanning protein YciB (186 aa).

5 helical membrane-spanning segments follow: residues 10–30 (IILFFAAFKVWGIYVATAVAI), 47–67 (VEPLQWLSLGVIVLFGGATLL), 76–96 (WKPTVLYWLMGGTLLVGQLVF), 121–141 (WGWTGFFATMGVLNLWVAYNF), and 149–169 (FKLFGGIGLMFAFVIAQALYL).

Belongs to the YciB family.

The protein localises to the cell inner membrane. In terms of biological role, plays a role in cell envelope biogenesis, maintenance of cell envelope integrity and membrane homeostasis. The polypeptide is Inner membrane-spanning protein YciB (Acidovorax sp. (strain JS42)).